Consider the following 1788-residue polypeptide: Genome polyprotein (1788 aa).

The interval 1–184 is interaction with host MAP1LC3A/LC3; the sequence is MMMASKDVVA…LCPLPPIDLR (184 aa). The span at 58–68 shows a compositional bias: low complexity; it reads GRTTPEPTGTA. The interval 58–86 is disordered; that stretch reads GRTTPEPTGTAGPPPKQQRDRPPRTQEEV. Over residues 74-84 the composition is skewed to basic and acidic residues; it reads QQRDRPPRTQE. An interaction with NTPase region spans residues 185–399; the sequence is NMEPASEPTI…ASLLPDFHLQ (215 aa). Positions 302–399 are interaction with NS4; it reads HPTQSWSQQT…ASLLPDFHLQ (98 aa). Host ER membrane association regions lie at residues 319–350 and 361–399; these read KLEL…KPLN and TFMG…FHLQ. The tract at residues 400 to 575 is interaction with NS1-2 and NS4 and homooligomerization; that stretch reads GPEDLARDLV…GKTKAAEHLA (176 aa). One can recognise an SF3 helicase domain in the interval 533–698; the sequence is RISMARSALA…EQIRRVSPGD (166 aa). Position 561–568 (561–568) interacts with ATP; it reads GPPGIGKT. Residues 652–757 form an important for mitochondrion targeting region; sequence AIVITTNAPG…AVALTMERQD (106 aa). Positions 827–833 are functions as endoplasmic reticulum export signal; it reads YSLESDG. The segment at 866-911 is host membrane association; the sequence is RAVAYASCIQSAITSILQIAGSALVVNRAVKRMFGTRTATLSLEGP. A disordered region spans residues 948-979; it reads EEVAHTEIPSATMEGKNKGKNKKGRGRRNNYN. The segment covering 965-975 has biased composition (basic residues); the sequence is KGKNKKGRGRR. The interval 988–993 is acidic; it reads DEEYEE. Tyr-991 is subject to O-(5'-phospho-RNA)-tyrosine. The segment at 1083 to 1099 is interaction with host EIF4G; the sequence is WADDEREVDYNEKISFE. The Peptidase C37 domain occupies 1100 to 1280; it reads APPTLWSRVT…QASEGETTLE (181 aa). Residues His-1129, Glu-1153, and Cys-1238 each act as for 3CLpro activity in the active site. The region spanning 1515 to 1636 is the RdRp catalytic domain; the sequence is KYHFDADYTA…STDIEFDPAK (122 aa). Residues Asp-1519, Asp-1521, Asp-1623, and Glu-1624 each contribute to the Mg(2+) site.

In terms of assembly, homodimer. Homooligomer. Interacts with NTPase; this interaction increases the proapoptotic activity of the NTPase and is crucial for the formation of the viral replication complex. Interacts with NS4; this interaction is crucial for the formation of the viral replication complex. Interacts (via N-terminus) with host VAPA. Interacts with host MAP1LC3A/LC3; this interaction does not seem to be linked to host autophagy, but rather plays a role in the formation of viral factories. Homooligomer. Interacts with NS1-2; this interaction increases the proapoptotic activity of the NTPase and is crucial for the formation of the viral replication complex. Interacts with NS4; this interaction increases the proapoptotic activity of the NTPase. As to quaternary structure, homodimer. Monomer; in solution. In terms of assembly, interacts with NTPase; this interaction increases the proapoptotic activity of the NTPase. Interacts with NS1-2; this interaction is crucial for the formation of the viral replication complex. Monomer. Interacts with the RNA-directed RNA polymerase; this interaction induces the multimerization of the RdRp and enhances its activity. Interacts with host IEF4G1; this interaction plays a role in translation of viral proteins. As to quaternary structure, homohexamer; also forms fibrous hexameric oligomer. Interacts with the viral genome-linked protein; this interaction induces the multimerization of the RdRp and enhances its activity. Mg(2+) serves as cofactor. The cofactor is Mn(2+). Post-translationally, specific enzymatic cleavages in vivo yield mature proteins. 3CLpro is first autocatalytically cleaved, then processes the whole polyprotein. NS1/2-3 and NS3-4 sites are cleaved rapidly and NS4-5, NS5-6, and NS6-7 sites are processed subsequently and less efficiently. In terms of processing, VPg is uridylylated by the polymerase and is covalently attached to the 5'-end of the polyadenylated genomic and subgenomic RNAs. This uridylylated form acts as a nucleotide-peptide primer for the polymerase.

The protein resides in the host Golgi apparatus membrane. Its subcellular location is the host endoplasmic reticulum membrane. The catalysed reaction is a ribonucleoside 5'-triphosphate + H2O = a ribonucleoside 5'-diphosphate + phosphate + H(+). It carries out the reaction Endopeptidase with a preference for cleavage when the P1 position is occupied by Glu-|-Xaa and the P1' position is occupied by Gly-|-Yaa.. It catalyses the reaction RNA(n) + a ribonucleoside 5'-triphosphate = RNA(n+1) + diphosphate. Induces the proliferation of the host smooth ER membranes forming long tubular structures. These remodeled membranes probably form the viral factories that contain the replication complex. May play a role in viral replication by interacting with host VAPA, a vesicle-associated membrane protein that plays a role in SNARE-mediated vesicle fusion. This interaction may target replication complex to intracellular membranes. Its function is as follows. Displays NTPase activity, but no helicase activity. Induces the formation of convoluted membranes derived from the host ER. These remodeled membranes probably form the viral factories that contain the replication complex. Initiates host cell death by targeting the mitochondrial outer membrane, leading to the permeabilization of mitochondria, programmed host cell death and viral egress. Probably plays a role in preventing the assembly of host stress granules. Functionally, probable key protein responsible for the formation of membrane alterations by the virus. Induces the formation of convoluted membranes derived from the host ER. These remodeled membranes probably form the viral factories that contain the replication complex. May play a role in targeting replication complex to intracellular membranes. In terms of biological role, viral genome-linked protein is covalently linked to the 5'-end of the positive-strand, negative-strand genomic RNAs and subgenomic RNA. Acts as a genome-linked replication primer. May recruit ribosome to viral RNA thereby promoting viral proteins translation. Interacts with host translation initiation complex to allow the translation of viral proteins. Induces the formation of aggregates of RNA-directed RNA polymerase in the presence of RNA. Through its interaction with the viral RNA-directed RNA polymerase, plays a crucial role in enhancing the polymerase activity. Processes the polyprotein. 3CLpro-RdRp is first released by autocleavage, then all other proteins are cleaved. May cleave polyadenylate-binding protein thereby inhibiting cellular translation. Its function is as follows. Replicates genomic and antigenomic RNA by recognizing replications specific signals. Also transcribes a subgenomic mRNA by initiating RNA synthesis internally on antigenomic RNA. This sgRNA codes for structural proteins. Catalyzes the covalent attachment VPg with viral RNAs. This Southampton virus (strain GI/Human/United Kingdom/Southampton/1991) (SHV) protein is Genome polyprotein.